The following is a 1439-amino-acid chain: Probable histone acetyltransferase HAC-like 2 (1439 aa).

Disordered regions lie at residues 1–43 (MKQG…ASAD) and 313–335 (YGIS…TPTP). Positions 325-335 (VNPSTRSTPTP) are enriched in polar residues. Residues 607 to 687 (ENTKQYHAQA…NEHCHVCCKA (81 aa)) form a TAZ-type zinc finger. The PHD-type; degenerate zinc finger occupies 827–933 (KIHCHVQQET…EYTCFKCYIE (107 aa)). The CBP/p300-type HAT domain maps to 948-1383 (VRGAKDLPRT…MLYHLHNPTG (436 aa)). A coiled-coil region spans residues 964–989 (EERLFKRLREERQERANKLKTSLDEV). Acetyl-CoA contacts are provided by residues 1071–1073 (LDS), 1090–1091 (RT), and Trp1146. A ZZ-type zinc finger spans residues 1265-1328 (HLQYSCSHCC…ILHPVEIVGV (64 aa)). Positions 1270, 1273, 1285, 1288, 1294, 1297, 1310, and 1318 each coordinate Zn(2+).

It is found in the nucleus. It carries out the reaction L-lysyl-[protein] + acetyl-CoA = N(6)-acetyl-L-lysyl-[protein] + CoA + H(+). Functionally, acetyltransferase enzyme. Acetylates histones, giving a specific tag for transcriptional activation. This is Probable histone acetyltransferase HAC-like 2 from Oryza sativa subsp. japonica (Rice).